We begin with the raw amino-acid sequence, 65 residues long: LTCLNCPEVYCRRFQKCRNGEKICFKKFDQRNLLGKRYEIGCAATCPEAKPREIVQCCSTDKCNR.

Cystine bridges form between cysteine 3/cysteine 24, cysteine 6/cysteine 11, cysteine 17/cysteine 42, cysteine 46/cysteine 57, and cysteine 58/cysteine 63.

Belongs to the three-finger toxin family. Ancestral subfamily. Orphan group II sub-subfamily. Expressed by the venom gland.

Its subcellular location is the secreted. Binds with low affinity to muscular (alpha-1-beta-1-delta-epsilon/CHRNA1-CHRNB1-CHRND-CHRNE) and very low affinity to neuronal (alpha-7/CHRNA7) nicotinic acetylcholine receptor (nAChR). The polypeptide is Weak neurotoxin 8 (Naja naja (Indian cobra)).